The following is a 270-amino-acid chain: Proteasome subunit alpha (270 aa).

The disordered stretch occupies residues 229-270 (LLDTEAAGSTPTDAPSDTEDGDSTDGTDRADGTTDSTEETEK). Residues 244-253 (SDTEDGDSTD) show a composition bias toward acidic residues.

The protein belongs to the peptidase T1A family. As to quaternary structure, the 20S proteasome core is composed of 14 alpha and 14 beta subunits that assemble into four stacked heptameric rings, resulting in a barrel-shaped structure. The two inner rings, each composed of seven catalytic beta subunits, are sandwiched by two outer rings, each composed of seven alpha subunits. The catalytic chamber with the active sites is on the inside of the barrel. Has a gated structure, the ends of the cylinder being occluded by the N-termini of the alpha-subunits. Is capped by the proteasome-associated ATPase, ARC.

It localises to the cytoplasm. Its pathway is protein degradation; proteasomal Pup-dependent pathway. Its activity is regulated as follows. The formation of the proteasomal ATPase ARC-20S proteasome complex, likely via the docking of the C-termini of ARC into the intersubunit pockets in the alpha-rings, may trigger opening of the gate for substrate entry. Interconversion between the open-gate and close-gate conformations leads to a dynamic regulation of the 20S proteasome proteolysis activity. Its function is as follows. Component of the proteasome core, a large protease complex with broad specificity involved in protein degradation. This is Proteasome subunit alpha from Streptomyces griseus subsp. griseus (strain JCM 4626 / CBS 651.72 / NBRC 13350 / KCC S-0626 / ISP 5235).